We begin with the raw amino-acid sequence, 912 residues long: DNA (cytosine-5)-methyltransferase 3A (912 aa).

2 disordered regions span residues 1–178 (MPAM…GWES) and 221–286 (IAGM…EYED). A compositionally biased stretch (basic and acidic residues) spans 17 to 40 (AEREEDRKDGEEQEEPRGKEERQE). The segment covering 47 to 57 (KVGRPGRKRKH) has biased composition (basic residues). Residues 74–83 (KSPSMAQDSG) show a composition bias toward polar residues. Serine 105 carries the post-translational modification Phosphoserine. Over residues 113–128 (GAPAEGEGAAETLPEA) the composition is skewed to low complexity. A Phosphothreonine modification is found at threonine 124. The segment covering 149 to 167 (AGKEQKETNIESMKMEGSR) has biased composition (basic and acidic residues). Lysine 162 is covalently cross-linked (Glycyl lysine isopeptide (Lys-Gly) (interchain with G-Cter in SUMO2)). Arginine 171 carries the post-translational modification Omega-N-methylarginine. Positions 199 to 403 (SKRKRDEWLA…DTAKAVEVQN (205 aa)) are interaction with DNMT1 and DNMT3B. Serine 243 and serine 255 each carry phosphoserine. The segment covering 246–260 (AVQQPTDPASPTVAT) has biased composition (polar residues). Threonine 261 is modified (phosphothreonine). Phosphoserine is present on serine 267. The segment covering 269–279 (AGDKNATKAGD) has biased composition (basic and acidic residues). The PWWP domain occupies 292 to 350 (IGELVWGKLRGFSWWPGRIVSWWMTGRSRAAEGTRWVMWFGDGKFSVVCVEKLMPLSSF). A phosphoserine mark is found at serine 390 and serine 393. Positions 447 to 466 (AYAPPPPAKKPRKSTAEKPK) are disordered. Residues 482 to 614 (EVRQKCRNIE…LQMFFANNHD (133 aa)) enclose the ADD domain. The segment at 493–523 (ICISCGSLNVTLEHPLFVGGMCQNCKNCFLE) adopts a GATA-type; atypical zinc-finger fold. The tract at residues 494-586 (CISCGSLNVT…KEDPWNCYMC (93 aa)) is interaction with the PRC2/EED-EZH2 complex. The PHD-type; atypical zinc finger occupies 534 to 590 (QSYCTICCGGREVLMCGNNNCCRCFCVECVDLLVGPGAAQAAIKEDPWNCYMCGHKG). An SAM-dependent MTase C5-type domain is found at 634-912 (IRVLSLFDGI…APLKEYFACV (279 aa)). S-adenosyl-L-methionine-binding positions include 641 to 645 (DGIAT), glutamate 664, and 686 to 688 (DVR). Cysteine 710 is an active-site residue. An S-methylcysteine; by autocatalysis modification is found at cysteine 710. 891 to 893 (RSW) contacts S-adenosyl-L-methionine.

The protein belongs to the class I-like SAM-binding methyltransferase superfamily. C5-methyltransferase family. In terms of assembly, heterotetramer composed of 1 DNMT3A homodimer and 2 DNMT3L subunits (DNMT3L-DNMT3A-DNMT3A-DNMT3L). Interacts with UBC9, PIAS1 and PIAS2. Binds the ZBTB18 transcriptional repressor. Interacts with SETDB1. Associates with HDAC1 through its ADD domain. Interacts with UHRF1. Interacts with DNMT1 and DNMT3B. Interacts with the PRC2/EED-EZH2 complex. Interacts with MPHOSPH8. Interacts with histone H3 that is not methylated at 'Lys-4' (H3K4). Interacts with SPOCD1. Interacts with ZNF263; recruited to the SIX3 promoter along with other proteins involved in chromatin modification and transcriptional corepression where it contributes to transcriptional repression. Post-translationally, sumoylated; sumoylation disrupts the ability to interact with histone deacetylases (HDAC1 and HDAC2) and repress transcription. In terms of processing, auto-methylated at Cys-710: auto-methylation takes place in absence of DNA substrate and inactivates the DNA methyltransferase activity. Inactivation by auto-methylation may be used to inactivate unused DNA methyltransferases in the cell. Highly expressed in fetal tissues, skeletal muscle, heart, peripheral blood mononuclear cells, kidney, and at lower levels in placenta, brain, liver, colon, spleen, small intestine and lung.

The protein localises to the nucleus. It localises to the chromosome. Its subcellular location is the cytoplasm. The catalysed reaction is a 2'-deoxycytidine in DNA + S-adenosyl-L-methionine = a 5-methyl-2'-deoxycytidine in DNA + S-adenosyl-L-homocysteine + H(+). The enzyme catalyses L-cysteinyl-[protein] + S-adenosyl-L-methionine = S-methyl-L-cysteinyl-[protein] + S-adenosyl-L-homocysteine + H(+). With respect to regulation, activated by binding to the regulatory factor DNMT3L. Auto-methylation at Cys-710 in absence of DNA inactivates the DNA methyltransferase activity. Required for genome-wide de novo methylation and is essential for the establishment of DNA methylation patterns during development. DNA methylation is coordinated with methylation of histones. It modifies DNA in a non-processive manner and also methylates non-CpG sites. May preferentially methylate DNA linker between 2 nucleosomal cores and is inhibited by histone H1. Plays a role in paternal and maternal imprinting. Required for methylation of most imprinted loci in germ cells. Acts as a transcriptional corepressor for ZBTB18. Recruited to trimethylated 'Lys-36' of histone H3 (H3K36me3) sites. Can actively repress transcription through the recruitment of HDAC activity. Also has weak auto-methylation activity on Cys-710 in absence of DNA. This is DNA (cytosine-5)-methyltransferase 3A (DNMT3A) from Homo sapiens (Human).